Reading from the N-terminus, the 294-residue chain is tRNA pseudouridine synthase B (294 aa).

Asp-39 acts as the Nucleophile in catalysis.

This sequence belongs to the pseudouridine synthase TruB family. Type 1 subfamily.

The enzyme catalyses uridine(55) in tRNA = pseudouridine(55) in tRNA. Responsible for synthesis of pseudouridine from uracil-55 in the psi GC loop of transfer RNAs. This is tRNA pseudouridine synthase B from Streptococcus pyogenes serotype M28 (strain MGAS6180).